The following is a 449-amino-acid chain: tRNA (guanine(37)-N(1))-methyltransferase (449 aa).

S-adenosyl-L-methionine contacts are provided by residues His-216, 254 to 255 (DL), 282 to 283 (DG), and Asn-345.

It belongs to the class I-like SAM-binding methyltransferase superfamily. TRM5/TYW2 family. As to quaternary structure, monomer.

Its subcellular location is the mitochondrion matrix. The protein resides in the nucleus. It is found in the cytoplasm. The enzyme catalyses guanosine(37) in tRNA + S-adenosyl-L-methionine = N(1)-methylguanosine(37) in tRNA + S-adenosyl-L-homocysteine + H(+). Specifically methylates the N1 position of guanosine-37 in various cytoplasmic and mitochondrial tRNAs. Methylation is not dependent on the nature of the nucleoside 5' of the target nucleoside. This is the first step in the biosynthesis of wybutosine (yW), a modified base adjacent to the anticodon of tRNAs and required for accurate decoding. The chain is tRNA (guanine(37)-N(1))-methyltransferase from Candida albicans (strain SC5314 / ATCC MYA-2876) (Yeast).